A 246-amino-acid polypeptide reads, in one-letter code: NAD-dependent protein deacetylase (246 aa).

In terms of domain architecture, Deacetylase sirtuin-type spans 1–246; sequence MKKPDIQQLK…VIEEIVNSNS (246 aa). The NAD(+) site is built by A25, F36, R37, Q106, I108, D109, and H124. F36 contributes to the nicotinamide binding site. Nicotinamide contacts are provided by I108 and D109. The active-site Proton acceptor is H124. Zn(2+) is bound by residues C132, C135, C152, and C155. NAD(+) contacts are provided by S193, S194, N216, and D233.

Belongs to the sirtuin family. Class U subfamily. Zn(2+) serves as cofactor.

The protein resides in the cytoplasm. The enzyme catalyses N(6)-acetyl-L-lysyl-[protein] + NAD(+) + H2O = 2''-O-acetyl-ADP-D-ribose + nicotinamide + L-lysyl-[protein]. Its function is as follows. NAD-dependent protein deacetylase which modulates the activities of several enzymes which are inactive in their acetylated form. The sequence is that of NAD-dependent protein deacetylase from Staphylococcus epidermidis (strain ATCC 12228 / FDA PCI 1200).